The chain runs to 157 residues: Ribosomal RNA large subunit methyltransferase H (157 aa).

Residues leucine 73, glycine 104, and 123-128 contribute to the S-adenosyl-L-methionine site; that span reads LGPLTL.

Belongs to the RNA methyltransferase RlmH family. As to quaternary structure, homodimer.

Its subcellular location is the cytoplasm. It catalyses the reaction pseudouridine(1915) in 23S rRNA + S-adenosyl-L-methionine = N(3)-methylpseudouridine(1915) in 23S rRNA + S-adenosyl-L-homocysteine + H(+). In terms of biological role, specifically methylates the pseudouridine at position 1915 (m3Psi1915) in 23S rRNA. This Xylella fastidiosa (strain M23) protein is Ribosomal RNA large subunit methyltransferase H.